The following is a 309-amino-acid chain: Small ribosomal subunit biogenesis GTPase RsgA (309 aa).

Residues 88–247 enclose the CP-type G domain; that stretch reads KNLITRPPVA…IADTPGFNKP (160 aa). GTP contacts are provided by residues 137 to 140 and 189 to 197; these read TKRD and GPSGVGKSS. Zn(2+) contacts are provided by Cys-272, Cys-277, His-279, and Cys-285.

The protein belongs to the TRAFAC class YlqF/YawG GTPase family. RsgA subfamily. In terms of assembly, monomer. Associates with 30S ribosomal subunit, binds 16S rRNA. Zn(2+) serves as cofactor.

The protein resides in the cytoplasm. Functionally, one of several proteins that assist in the late maturation steps of the functional core of the 30S ribosomal subunit. Helps release RbfA from mature subunits. May play a role in the assembly of ribosomal proteins into the subunit. Circularly permuted GTPase that catalyzes slow GTP hydrolysis, GTPase activity is stimulated by the 30S ribosomal subunit. The polypeptide is Small ribosomal subunit biogenesis GTPase RsgA (Prochlorococcus marinus (strain SARG / CCMP1375 / SS120)).